Reading from the N-terminus, the 146-residue chain is uncharacterized protein (146 aa).

This is an uncharacterized protein from Haemophilus influenzae (strain ATCC 51907 / DSM 11121 / KW20 / Rd).